The following is a 324-amino-acid chain: Short-chain dehydrogenase/reductase iacJ (324 aa).

NADP(+) contacts are provided by Ile-42, Lys-66, Asp-93, Asn-120, Tyr-204, Lys-208, and Thr-239. Residue Tyr-204 is the Proton donor of the active site. Lys-208 acts as the Lowers pKa of active site Tyr in catalysis.

This sequence belongs to the short-chain dehydrogenases/reductases (SDR) family.

It participates in secondary metabolite biosynthesis. Its function is as follows. Short-chain dehydrogenase/reductase; part of the gene cluster that mediates the biosynthesis of iso-A82775C, a enylepoxycyclohexane and biosynthetic precursor of the chloropestolide anticancer natural products. Within the cluster, the prenyltransferase iacE prenylates siccayne to generate pestalodiol E, using dimethylallyl diphosphate (DMAPP) as cosubstrate. The probable oxidoreductase iacF is then involved in the epoxidation of pestalodiol F to pestalodiol F, which is further converted to pestalofone A by the short-chain dehydrogenase/reductase iacG. Iso-A82775C is subsequently generated from pestalofone A by the short-chain dehydrogenase/reductase iacC. Iso-A82775C is further condensed with maldoxin via a Diels-Alder reaction to produce the anticancer natural products chloropestolides A to E. This chain is Short-chain dehydrogenase/reductase iacJ, found in Pestalotiopsis fici (strain W106-1 / CGMCC3.15140).